A 152-amino-acid polypeptide reads, in one-letter code: Protein NrdI (152 aa).

It belongs to the NrdI family.

In terms of biological role, probably involved in ribonucleotide reductase function. The sequence is that of Protein NrdI from Mycobacterium sp. (strain JLS).